The chain runs to 512 residues: Probable anion transporter 3, chloroplastic (512 aa).

The N-terminal 44 residues, 1–44, are a transit peptide targeting the chloroplast; sequence MATVGSLKPLHHSSCSSSFPRNPIVNRKALLGFVFDSARKNQIR. A run of 12 helical transmembrane segments spans residues 102–124, 139–159, 167–187, 191–211, 228–248, 250–270, 324–344, 359–379, 396–416, 422–442, 462–482, and 486–506; these read VILTACMMCLCNADRVVMSVAVV, VVQSSFLWGYIFSSVIGGALV, VLAWGVALWSLATLLTPWAAA, LALLCVRAFFGLAEGVAMPSM, VGISMAGFHMGNVVGLLLTPL, LSSIGISGPFILFASLGLLWV, WAIIFANVTNNWGYFVLLSWM, AAWFSALPWATMAISGYYAGA, KIMQSIGFMGPGLSLLCLNFA, AAVFMTIALSLSSFSQAGFLL, AGTLAAIVSTIGTGYFVQWLG, and AFLTVTAFLYFATTVFWLLFA.

It belongs to the major facilitator superfamily. Sodium/anion cotransporter (TC 2.A.1.14) family. As to expression, expressed in roots.

The protein localises to the plastid. It is found in the chloroplast membrane. In terms of biological role, inorganic phosphate and probable anion transporter. The polypeptide is Probable anion transporter 3, chloroplastic (ANTR3) (Arabidopsis thaliana (Mouse-ear cress)).